Reading from the N-terminus, the 393-residue chain is Acetylornithine aminotransferase (393 aa).

Pyridoxal 5'-phosphate-binding positions include 105–106 and F138; that span reads GA. R141 is a N(2)-acetyl-L-ornithine binding site. 224–227 is a pyridoxal 5'-phosphate binding site; that stretch reads DEVQ. K253 is modified (N6-(pyridoxal phosphate)lysine). S281 serves as a coordination point for N(2)-acetyl-L-ornithine. T282 lines the pyridoxal 5'-phosphate pocket.

This sequence belongs to the class-III pyridoxal-phosphate-dependent aminotransferase family. ArgD subfamily. Homodimer. Requires pyridoxal 5'-phosphate as cofactor.

It is found in the cytoplasm. It carries out the reaction N(2)-acetyl-L-ornithine + 2-oxoglutarate = N-acetyl-L-glutamate 5-semialdehyde + L-glutamate. The protein operates within amino-acid biosynthesis; L-arginine biosynthesis; N(2)-acetyl-L-ornithine from L-glutamate: step 4/4. The sequence is that of Acetylornithine aminotransferase from Haemophilus ducreyi (strain 35000HP / ATCC 700724).